A 149-amino-acid polypeptide reads, in one-letter code: Secreted RxLR effector protein 47 (149 aa).

Positions 1-22 (MICLLPLIAVMLFVFATHTVLA) are cleaved as a signal peptide. A RxLR-dEER motif is present at residues 57-79 (RFLRQETTFEEKPSVNDVHAEER).

It belongs to the RxLR effector family.

It localises to the secreted. It is found in the host membrane. In terms of biological role, secreted effector that completely suppresses the host cell death induced by cell death-inducing proteins. The sequence is that of Secreted RxLR effector protein 47 from Plasmopara viticola (Downy mildew of grapevine).